Reading from the N-terminus, the 429-residue chain is Ribosomal RNA small subunit methyltransferase B (429 aa).

Residues 254-260, Asp-277, Asp-303, and Asp-322 each bind S-adenosyl-L-methionine; that span reads CAAPGGK. Residue Cys-375 is the Nucleophile of the active site.

It belongs to the class I-like SAM-binding methyltransferase superfamily. RsmB/NOP family.

It localises to the cytoplasm. It carries out the reaction cytidine(967) in 16S rRNA + S-adenosyl-L-methionine = 5-methylcytidine(967) in 16S rRNA + S-adenosyl-L-homocysteine + H(+). In terms of biological role, specifically methylates the cytosine at position 967 (m5C967) of 16S rRNA. This Escherichia coli O17:K52:H18 (strain UMN026 / ExPEC) protein is Ribosomal RNA small subunit methyltransferase B.